A 466-amino-acid chain; its full sequence is ATP synthase subunit beta (466 aa).

ATP is bound at residue 148–155 (GGAGVGKT).

It belongs to the ATPase alpha/beta chains family. In terms of assembly, F-type ATPases have 2 components, CF(1) - the catalytic core - and CF(0) - the membrane proton channel. CF(1) has five subunits: alpha(3), beta(3), gamma(1), delta(1), epsilon(1). CF(0) has three main subunits: a(1), b(2) and c(9-12). The alpha and beta chains form an alternating ring which encloses part of the gamma chain. CF(1) is attached to CF(0) by a central stalk formed by the gamma and epsilon chains, while a peripheral stalk is formed by the delta and b chains.

Its subcellular location is the cell inner membrane. It carries out the reaction ATP + H2O + 4 H(+)(in) = ADP + phosphate + 5 H(+)(out). Its function is as follows. Produces ATP from ADP in the presence of a proton gradient across the membrane. The catalytic sites are hosted primarily by the beta subunits. This chain is ATP synthase subunit beta, found in Xylella fastidiosa (strain 9a5c).